We begin with the raw amino-acid sequence, 637 residues long: Rab11 family-interacting protein 4 (637 aa).

The EF-hand domain maps to Gly-49–Cys-84. Ca(2+)-binding residues include Asp-62, Asn-64, Arg-68, and Asp-73. The tract at residues Lys-82–His-637 is necessary for interaction with RAB11A, subcellular location, homo- or heterooligomerization. Disordered regions lie at residues Glu-138–Lys-175 and Tyr-219–Gln-256. The stretch at Lys-280–Tyr-617 forms a coiled coil. The FIP-RBD domain occupies Glu-574–Lys-636.

Homodimer. Forms a complex with Rab11 (RAB11A or RAB11B) and ARF6. Interacts with RAB11A; the interaction is direct. Forms a heterooligomeric complex with RAB11FIP2, RAB11FIP3 and RAB11FIP5. Interacts with ECPAS. In terms of assembly, (Microbial infection) Interacts with human cytomegalovirus/HHV-5 protein gM/UL100. As to expression, present at high level in testis (at protein level). Weakly expressed in other tissues.

Its subcellular location is the endosome. The protein localises to the cytoplasm. It is found in the cytoskeleton. The protein resides in the spindle. It localises to the microtubule organizing center. Its subcellular location is the centrosome. The protein localises to the recycling endosome membrane. It is found in the cleavage furrow. The protein resides in the midbody. It localises to the cytoplasmic vesicle. Acts as a regulator of endocytic traffic by participating in membrane delivery. Required for the abscission step in cytokinesis, possibly by acting as an 'address tag' delivering recycling endosome membranes to the cleavage furrow during late cytokinesis. In case of infection by HCMV (human cytomegalovirus), may participate in egress of the virus out of nucleus; this function is independent of ARF6. The polypeptide is Rab11 family-interacting protein 4 (RAB11FIP4) (Homo sapiens (Human)).